A 407-amino-acid chain; its full sequence is Venom metalloproteinase 3 (407 aa).

N-linked (GlcNAc...) asparagine glycans are attached at residues Asn-42, Asn-91, Asn-126, and Asn-166. The 215-residue stretch at 191-405 folds into the Peptidase M12B domain; it reads FYPKLLVLVD…TSAACLKDTY (215 aa). 2 disulfide bridges follow: Cys-317–Cys-400 and Cys-356–Cys-384. His-340 serves as a coordination point for Zn(2+). Glu-341 is a catalytic residue. Zn(2+) is bound by residues His-344 and His-350. Residue Asn-391 is glycosylated (N-linked (GlcNAc...) asparagine).

It in the C-terminal section; belongs to the venom metalloproteinase (M12B) family. In terms of assembly, monomer. Zn(2+) is required as a cofactor. Expressed by the venom gland.

The protein localises to the secreted. Its activity is regulated as follows. The gelatinase activity is inhibited by EDTA. Functionally, the recombinant protein has gelatinase activity. In vivo, injection of this recombinant into fifth instar L.oleracea (host) larvae results in partial insect mortality associated with the molt to sixth instar, with surviving insects showing retarded development and growth. The polypeptide is Venom metalloproteinase 3 (Eulophus pennicornis (Parasitoid wasp)).